Reading from the N-terminus, the 149-residue chain is Chromophore lyase CpcS/CpeS homolog (149 aa).

This sequence belongs to the CpcS/CpeS biliprotein lyase family.

Its subcellular location is the plastid. The protein resides in the chloroplast. Functionally, might function to covalently attach a chromophore to Cys residue(s) of phycobiliproteins. The chain is Chromophore lyase CpcS/CpeS homolog from Porphyra purpurea (Red seaweed).